The chain runs to 440 residues: Chromosome partition protein MukF (440 aa).

The tract at residues L208–I236 is leucine-zipper.

Belongs to the MukF family. As to quaternary structure, interacts, and probably forms a ternary complex, with MukE and MukB via its C-terminal region. The complex formation is stimulated by calcium or magnesium. It is required for an interaction between MukE and MukB.

It is found in the cytoplasm. It localises to the nucleoid. Its function is as follows. Involved in chromosome condensation, segregation and cell cycle progression. May participate in facilitating chromosome segregation by condensation DNA from both sides of a centrally located replisome during cell division. Not required for mini-F plasmid partitioning. Probably acts via its interaction with MukB and MukE. Overexpression results in anucleate cells. It has a calcium binding activity. The polypeptide is Chromosome partition protein MukF (Escherichia coli O127:H6 (strain E2348/69 / EPEC)).